Reading from the N-terminus, the 251-residue chain is 1-(5-phosphoribosyl)-5-[(5-phosphoribosylamino)methylideneamino] imidazole-4-carboxamide isomerase (251 aa).

The active-site Proton acceptor is the aspartate 8. Aspartate 131 (proton donor) is an active-site residue.

The protein belongs to the HisA/HisF family.

The protein resides in the cytoplasm. The catalysed reaction is 1-(5-phospho-beta-D-ribosyl)-5-[(5-phospho-beta-D-ribosylamino)methylideneamino]imidazole-4-carboxamide = 5-[(5-phospho-1-deoxy-D-ribulos-1-ylimino)methylamino]-1-(5-phospho-beta-D-ribosyl)imidazole-4-carboxamide. The protein operates within amino-acid biosynthesis; L-histidine biosynthesis; L-histidine from 5-phospho-alpha-D-ribose 1-diphosphate: step 4/9. The protein is 1-(5-phosphoribosyl)-5-[(5-phosphoribosylamino)methylideneamino] imidazole-4-carboxamide isomerase of Burkholderia thailandensis (strain ATCC 700388 / DSM 13276 / CCUG 48851 / CIP 106301 / E264).